The sequence spans 690 residues: UvrABC system protein B (690 aa).

Positions Gln30 to Arg188 constitute a Helicase ATP-binding domain. An ATP-binding site is contributed by Gly43 to Thr50. The Beta-hairpin motif lies at Tyr96–Ile119. In terms of domain architecture, Helicase C-terminal spans Gln435–Leu601. The UVR domain occupies Tyr641 to Ala676.

This sequence belongs to the UvrB family. As to quaternary structure, forms a heterotetramer with UvrA during the search for lesions. Interacts with UvrC in an incision complex.

Its subcellular location is the cytoplasm. Functionally, the UvrABC repair system catalyzes the recognition and processing of DNA lesions. A damage recognition complex composed of 2 UvrA and 2 UvrB subunits scans DNA for abnormalities. Upon binding of the UvrA(2)B(2) complex to a putative damaged site, the DNA wraps around one UvrB monomer. DNA wrap is dependent on ATP binding by UvrB and probably causes local melting of the DNA helix, facilitating insertion of UvrB beta-hairpin between the DNA strands. Then UvrB probes one DNA strand for the presence of a lesion. If a lesion is found the UvrA subunits dissociate and the UvrB-DNA preincision complex is formed. This complex is subsequently bound by UvrC and the second UvrB is released. If no lesion is found, the DNA wraps around the other UvrB subunit that will check the other stand for damage. The protein is UvrABC system protein B of Chlorobium phaeobacteroides (strain BS1).